Consider the following 86-residue polypeptide: MKVSVVLAITVLALLSVAYASEFEEKELVKEVVRTIFLGKEDAALREETDRECKWYLGDCKAHEDCCEHLRCHSRWDWCIWDGTFG.

An N-terminal signal peptide occupies residues 1–20 (MKVSVVLAITVLALLSVAYA). A propeptide spanning residues 21-51 (SEFEEKELVKEVVRTIFLGKEDAALREETDR) is cleaved from the precursor. 3 cysteine pairs are disulfide-bonded: Cys53-Cys67, Cys60-Cys72, and Cys66-Cys79. Residue Phe85 is modified to Phenylalanine amide.

Belongs to the neurotoxin 10 (Hwtx-1) family. 42 (Jztx-44) subfamily. As to expression, expressed by the venom gland.

Its subcellular location is the secreted. In terms of biological role, probable ion channel inhibitor. The protein is U22-theraphotoxin-Cg1a of Chilobrachys guangxiensis (Chinese earth tiger tarantula).